A 702-amino-acid chain; its full sequence is MRLVKQEYVLDGLDCSNCARKIENGVKGIKGINGCAVNFAASTLTVSADGKEEQWVTNKVEKKVKSIDPHVTVRQKHIKKSADDGYRNRMVNMLIRMAAAVILGAAAYLVQSGTIEFFLFLGAYLIIGGDIIIRAVKNIIRGQVFDEHFLMALATIGAFLIQQYPEGVAVMLFYQIGELFQGAAVSRSRKSISALMDIRPDYANLKTKNGIEQVSSEDVQTGDIIVVNPGESIPLDGKVVQGSAMVDTSALTGESVPRKAAEGQDVMSGFINQNGVLHIEVTKGYQESAVSKILDLVQNASSRKARTENFITKFAKYYTPAVVIIAVLLAFVPPLVLSGAALSDWVYRALIFLVISCPCALVVSIPLGFFGGIGAASKAGVLVKGSNYLEALNQVKYAVFDKTGTLTKGSFEVTEIKPAEGFTKDRLLEAAAYAELHSQHPIAESVRKAYGKMLSSDEIESYEEISGHGIFAKVNGTEILAGNKKLMEREQIEDVPDENAGTIVHVAVDQRYAGAIIIADEIKEDAAQAVADLKSLGIKQTAMLTGDSKQTGEAVGKQLGIGEVYAELLPQDKVAQVEALEAKLLPSEKLIFVGDGINDTPVLARADIGVAMGGLGSDAAVEAADIVLMTDQPSKIAEAIRIAKRTRRIVWQNIGFALGVKAIFLILGAFGIATMWEAVFSDVGVTLLAVANAMRVMRLKNK.

The Cytoplasmic portion of the chain corresponds to 1–86 (MRLVKQEYVL…HIKKSADDGY (86 aa)). The 69-residue stretch at 4 to 72 (VKQEYVLDGL…KVKSIDPHVT (69 aa)) folds into the HMA domain. Cd(2+) is bound by residues Cys15 and Cys18. The Co(2+) site is built by Cys15 and Cys18. 2 residues coordinate Zn(2+): Cys15 and Cys18. The helical transmembrane segment at 87-107 (RNRMVNMLIRMAAAVILGAAA) threads the bilayer. Residues 108–116 (YLVQSGTIE) lie on the Extracellular side of the membrane. The helical transmembrane segment at 117–136 (FFLFLGAYLIIGGDIIIRAV) threads the bilayer. At 137–143 (KNIIRGQ) the chain is on the cytoplasmic side. The chain crosses the membrane as a helical span at residues 144–163 (VFDEHFLMALATIGAFLIQQ). At 164 to 166 (YPE) the chain is on the extracellular side. Residues 167–186 (GVAVMLFYQIGELFQGAAVS) traverse the membrane as a helical segment. Residues 187-320 (RSRKSISALM…ITKFAKYYTP (134 aa)) are Cytoplasmic-facing. A helical transmembrane segment spans residues 321–339 (AVVIIAVLLAFVPPLVLSG). Topologically, residues 340 to 345 (AALSDW) are extracellular. The helical transmembrane segment at 346–363 (VYRALIFLVISCPCALVV) threads the bilayer. The Cytoplasmic portion of the chain corresponds to 364–648 (SIPLGFFGGI…AIRIAKRTRR (285 aa)). Asp401 serves as the catalytic 4-aspartylphosphate intermediate. 2 residues coordinate Mg(2+): Asp595 and Asp599. Residues 649-670 (IVWQNIGFALGVKAIFLILGAF) traverse the membrane as a helical segment. At 671–678 (GIATMWEA) the chain is on the extracellular side. Residues 679-694 (VFSDVGVTLLAVANAM) form a helical membrane-spanning segment. Residues 695 to 702 (RVMRLKNK) lie on the Cytoplasmic side of the membrane.

Belongs to the cation transport ATPase (P-type) (TC 3.A.3) family. Type IB subfamily.

The protein resides in the cell membrane. It catalyses the reaction Zn(2+)(in) + ATP + H2O = Zn(2+)(out) + ADP + phosphate + H(+). It carries out the reaction Cd(2+)(in) + ATP + H2O = Cd(2+)(out) + ADP + phosphate + H(+). Its function is as follows. Couples the hydrolysis of ATP with the transport of cadmium, zinc and cobalt out of the cell. Does not seem to transport copper. The chain is Cadmium, zinc and cobalt-transporting ATPase (cadA) from Bacillus subtilis (strain 168).